Consider the following 156-residue polypeptide: MPRRREVEKRKILPDPKFQDRIVAKFVNNLMREGKKSTGERIIYGAFDQVEQKLKDDPLKIFKKALDNVKPVVEVKSRRVGGATYQVPVEVRQDRRTALAMRWLIDYSKARGEKTMQEKLAGEIIDAANNRGNAVKKREDTHKMAEANKAFAHYRW.

This sequence belongs to the universal ribosomal protein uS7 family. As to quaternary structure, part of the 30S ribosomal subunit. Contacts proteins S9 and S11.

Its function is as follows. One of the primary rRNA binding proteins, it binds directly to 16S rRNA where it nucleates assembly of the head domain of the 30S subunit. Is located at the subunit interface close to the decoding center, probably blocks exit of the E-site tRNA. The protein is Small ribosomal subunit protein uS7 of Anaeromyxobacter sp. (strain Fw109-5).